Consider the following 518-residue polypeptide: UPF0053 inner membrane protein YoaE (518 aa).

Residues 1-13 lie on the Cytoplasmic side of the membrane; it reads MEFLMDPSIWAGL. A helical membrane pass occupies residues 14–34; it reads LTLVVLEIVLGIDNLVFIAIL. The Periplasmic segment spans residues 35–48; sequence ADKLPPKQRDKARL. A helical membrane pass occupies residues 49–69; the sequence is LGLSLALIMRLGLLSLISWMV. Over 70 to 78 the chain is Cytoplasmic; it reads TLTKPLFTV. The helical transmembrane segment at 79–99 threads the bilayer; that stretch reads MDFSFSGRDLIMLFGGIFLLF. Residues 100–124 are Periplasmic-facing; the sequence is KATTELHERLENRDHDSGHGKGYAS. The helical transmembrane segment at 125–145 threads the bilayer; it reads FWVVVTQIVILDAVFSLDAVI. The Cytoplasmic segment spans residues 146–149; it reads TAVG. The helical transmembrane segment at 150-170 threads the bilayer; it reads MVNHLPVMMAAVVIAMAVMLL. The Periplasmic segment spans residues 171 to 184; it reads ASKPLTRFVNQHPT. The chain crosses the membrane as a helical span at residues 185-205; that stretch reads VVVLCLSFLLMIGLSLVAEGF. Residue Gly206 is a topological domain, cytoplasmic. The helical transmembrane segment at 207 to 227 threads the bilayer; that stretch reads FHIPKGYLYAAIGFSIIIEVF. Residues 228–354 are Periplasmic-facing; sequence NQIARRNFIR…IGIVRAKELL (127 aa). 2 CBS domains span residues 304–363 and 367–427; these read MTPR…GVDV and ASAS…DADE. A helical membrane pass occupies residues 355-375; that stretch reads VALEEGVDVAAIASASPAIIV. The Cytoplasmic portion of the chain corresponds to 376–518; the sequence is PETLDPINLL…KEQPAHDEDE (143 aa).

It belongs to the UPF0053 family.

Its subcellular location is the cell inner membrane. This is UPF0053 inner membrane protein YoaE (yoaE) from Escherichia coli O157:H7.